We begin with the raw amino-acid sequence, 427 residues long: Proline--tRNA ligase (427 aa).

This sequence belongs to the class-II aminoacyl-tRNA synthetase family. ProS type 2 subfamily. As to quaternary structure, homodimer.

The protein localises to the cytoplasm. The enzyme catalyses tRNA(Pro) + L-proline + ATP = L-prolyl-tRNA(Pro) + AMP + diphosphate. Functionally, catalyzes the attachment of proline to tRNA(Pro) in a two-step reaction: proline is first activated by ATP to form Pro-AMP and then transferred to the acceptor end of tRNA(Pro). This Rickettsia akari (strain Hartford) protein is Proline--tRNA ligase.